The sequence spans 34 residues: Conotoxin S4.3 (34 aa).

Glutamine 1 is modified (pyrrolidone carboxylic acid). The residue at position 3 (glutamate 3) is a 4-carboxyglutamate. O-linked (HexNAc...) serine glycosylation is present at serine 7. O-linked (HexNAc...) threonine glycosylation occurs at threonine 9. 4-hydroxyproline is present on residues proline 17, proline 22, proline 31, and proline 32.

The protein belongs to the conotoxin A superfamily. In terms of processing, contains 3 disulfide bonds. In terms of tissue distribution, expressed by the venom duct.

The protein resides in the secreted. Functionally, probable neurotoxin with ion channel inhibitor activity. The chain is Conotoxin S4.3 from Conus striatus (Striated cone).